Consider the following 200-residue polypeptide: MTGFKQHTGLVVPLDTANIDTDAIIPKQFLQKVTRTGFGQHLFNDWRFLDDAGQQENPDFIMNAPRYQGASILLARENFGCGSSREHAPWALADYGIQVMIAPSFADIFYGNSINNQMVPVRLTDQEVDELFQYVETNEGAEITVDLETMQVTANGKTYSFEIDEFRRHCLLNGLDNIGLTLQHADKIAEYEAKIPAFLV.

It belongs to the LeuD family. LeuD type 1 subfamily. In terms of assembly, heterodimer of LeuC and LeuD.

It carries out the reaction (2R,3S)-3-isopropylmalate = (2S)-2-isopropylmalate. It participates in amino-acid biosynthesis; L-leucine biosynthesis; L-leucine from 3-methyl-2-oxobutanoate: step 2/4. Its function is as follows. Catalyzes the isomerization between 2-isopropylmalate and 3-isopropylmalate, via the formation of 2-isopropylmaleate. The protein is 3-isopropylmalate dehydratase small subunit of Photobacterium profundum (strain SS9).